Here is a 147-residue protein sequence, read N- to C-terminus: Hemoglobin subunit beta (147 aa).

Positions 2–147 (DWTDAERAAI…VVSALGRQYH (146 aa)) constitute a Globin domain. 2 residues coordinate heme b: histidine 63 and histidine 92.

Belongs to the globin family. Heterotetramer of two alpha chains and two beta chains. As to expression, red blood cells.

Functionally, involved in oxygen transport from gills to the various peripheral tissues. This chain is Hemoglobin subunit beta (hbb), found in Leiostomus xanthurus (Spot).